The primary structure comprises 413 residues: MFGRPKKSDNTKYYEILGVSKNASQDDLKKAYRKAAIKNHPDKGGDPEKFKELAQAYEVLSDPEKREIYDQYGEDALKEGMGGGGGHDPFDIFQSFFGGSPFGGGGSSRGRRQRRGEDVIHPLKVSLEDLYNGTSKKLSLSRNVICSKCKGKGSKSGASMKCPGCQGSGMKVSIRHLGPSMIQQMQHPCNECKGTGETINDKDRCSQCKGEKVVQEKKVLEVIVEKGMQNAQKITFPGEADEAPDTVTGDIVFVLQQKEHPKFKRKGDDLFVEHTLSLVESLCGFQFILTHLDGRQLLIKSLPGEVVKPDQFKAINDEGMPMYQRPFMKGKLYIHFSVEFPDSLNPEQCKALEGVLPPRTSVQLSDMELDECEETTLHDVNIEEEMRRKQAQEAYDEDEDMHGGAQRVQCAQQ.

One can recognise a J domain in the interval 10 to 75 (NTKYYEILGV…REIYDQYGED (66 aa)). The segment at 133-217 (GTSKKLSLSR…CKGEKVVQEK (85 aa)) adopts a CR-type zinc-finger fold. CXXCXGXG motif repeat units follow at residues 146-153 (CSKCKGKG), 162-169 (CPGCQGSG), 189-196 (CNECKGTG), and 205-212 (CSQCKGEK). Residues 387–413 (RRKQAQEAYDEDEDMHGGAQRVQCAQQ) are disordered. Cys-410 is modified (cysteine methyl ester). Residue Cys-410 is the site of S-farnesyl cysteine attachment. The propeptide at 411–413 (AQQ) is removed in mature form.

Expressed in seedlings in all tissues, but exceedingly high levels in hypocotyledons and roots.

It localises to the cell membrane. In terms of biological role, plays a continuous role in plant development probably in the structural organization of compartments. The chain is DnaJ protein homolog (DNAJ1) from Cucumis sativus (Cucumber).